Consider the following 431-residue polypeptide: Adenylosuccinate synthetase (431 aa).

Residues 13-19 (GDEGKGK) and 41-43 (GHT) contribute to the GTP site. Aspartate 14 serves as the catalytic Proton acceptor. Mg(2+) is bound by residues aspartate 14 and glycine 41. Residues 14-17 (DEGK), 39-42 (NAGH), threonine 130, arginine 144, glutamine 225, threonine 240, and arginine 304 contribute to the IMP site. The active-site Proton donor is the histidine 42. 300-306 (TTTGRSR) lines the substrate pocket. GTP-binding positions include arginine 306, 332-334 (KLD), and 414-416 (STG).

Belongs to the adenylosuccinate synthetase family. As to quaternary structure, homodimer. Mg(2+) is required as a cofactor.

The protein localises to the cytoplasm. The enzyme catalyses IMP + L-aspartate + GTP = N(6)-(1,2-dicarboxyethyl)-AMP + GDP + phosphate + 2 H(+). The protein operates within purine metabolism; AMP biosynthesis via de novo pathway; AMP from IMP: step 1/2. In terms of biological role, plays an important role in the de novo pathway of purine nucleotide biosynthesis. Catalyzes the first committed step in the biosynthesis of AMP from IMP. The chain is Adenylosuccinate synthetase from Marinobacter nauticus (strain ATCC 700491 / DSM 11845 / VT8) (Marinobacter aquaeolei).